A 503-amino-acid polypeptide reads, in one-letter code: uncharacterized protein (503 aa).

2 disordered regions span residues 1–26 (MADDEDDIVWIREDTAQSSVPTSPTT) and 132–156 (DQQQNDQLSAKLDPKTPNSVDDNSM). Positions 16–26 (AQSSVPTSPTT) are enriched in low complexity. The segment covering 147–156 (TPNSVDDNSM) has biased composition (polar residues).

This is an uncharacterized protein from Caenorhabditis elegans.